The primary structure comprises 238 residues: Ribosomal RNA small subunit methyltransferase G (238 aa).

S-adenosyl-L-methionine contacts are provided by residues G77, F82, 128-129 (AE), and R147.

It belongs to the methyltransferase superfamily. RNA methyltransferase RsmG family.

The protein localises to the cytoplasm. Functionally, specifically methylates the N7 position of guanine in position 535 of 16S rRNA. The sequence is that of Ribosomal RNA small subunit methyltransferase G from Listeria monocytogenes serotype 4b (strain CLIP80459).